The primary structure comprises 1177 residues: uncharacterized protein (1177 aa).

An N-terminal signal peptide occupies residues 1 to 26 (MKKLLKKSKFWWFLLCGLSVSTILVA). Cys27 is lipidated: N-palmitoyl cysteine. Cys27 carries the S-diacylglycerol cysteine lipid modification.

It belongs to the MG307/MG309/MG338 family.

The protein resides in the cell membrane. This is an uncharacterized protein from Mycoplasma genitalium (strain ATCC 33530 / DSM 19775 / NCTC 10195 / G37) (Mycoplasmoides genitalium).